We begin with the raw amino-acid sequence, 65 residues long: uncharacterized protein (65 aa).

A DNA-binding region (ompR/PhoB-type) is located at residues 1 to 65 (MIALSVCWQI…ETGIGYRFML (65 aa)).

This is an uncharacterized protein from Escherichia coli (strain K12).